The sequence spans 150 residues: Single-stranded DNA-binding protein (150 aa).

The SSB domain occupies 1–100 (MNKVVLIGRL…VVVESFDFID (100 aa)). The segment covering 129 to 139 (FSDSSFNSNDD) has biased composition (low complexity). The interval 129-150 (FSDSSFNSNDDMTPIDDGDIPF) is disordered. Residues 141-150 (TPIDDGDIPF) show a composition bias toward acidic residues.

Homotetramer.

This chain is Single-stranded DNA-binding protein (ssb), found in Clostridium perfringens (strain 13 / Type A).